The following is a 214-amino-acid chain: Alpha-S1-casein (214 aa).

A signal peptide spans 1–15 (MKLLILTCLVAVALA). S63, S79, S81, S82, S83, and S90 each carry phosphoserine. 2 repeats span residues 85–99 (EIVPISVEQKHIQKE) and 125–140 (EIVPNLAEEQLHSMKE).

This sequence belongs to the alpha-casein family. As to expression, mammary gland specific. Secreted in milk.

The protein resides in the secreted. Its function is as follows. Important role in the capacity of milk to transport calcium phosphate. The protein is Alpha-S1-casein (CSN1S1) of Bubalus bubalis (Domestic water buffalo).